The following is a 211-amino-acid chain: 3-demethoxyubiquinol 3-hydroxylase (211 aa).

Residues Glu-60, Glu-90, His-93, Glu-142, Glu-174, and His-177 each coordinate Fe cation.

The protein belongs to the COQ7 family. The cofactor is Fe cation.

It localises to the cell membrane. The enzyme catalyses a 5-methoxy-2-methyl-3-(all-trans-polyprenyl)benzene-1,4-diol + AH2 + O2 = a 3-demethylubiquinol + A + H2O. It functions in the pathway cofactor biosynthesis; ubiquinone biosynthesis. Its function is as follows. Catalyzes the hydroxylation of 2-nonaprenyl-3-methyl-6-methoxy-1,4-benzoquinol during ubiquinone biosynthesis. This is 3-demethoxyubiquinol 3-hydroxylase from Francisella tularensis subsp. holarctica (strain FTNF002-00 / FTA).